Here is a 122-residue protein sequence, read N- to C-terminus: Large ribosomal subunit protein uL14 (122 aa).

The protein belongs to the universal ribosomal protein uL14 family. As to quaternary structure, part of the 50S ribosomal subunit. Forms a cluster with proteins L3 and L19. In the 70S ribosome, L14 and L19 interact and together make contacts with the 16S rRNA in bridges B5 and B8.

Functionally, binds to 23S rRNA. Forms part of two intersubunit bridges in the 70S ribosome. The sequence is that of Large ribosomal subunit protein uL14 from Helicobacter pylori (strain J99 / ATCC 700824) (Campylobacter pylori J99).